A 207-amino-acid polypeptide reads, in one-letter code: Large ribosomal subunit protein uL4 (207 aa).

It belongs to the universal ribosomal protein uL4 family. Part of the 50S ribosomal subunit.

One of the primary rRNA binding proteins, this protein initially binds near the 5'-end of the 23S rRNA. It is important during the early stages of 50S assembly. It makes multiple contacts with different domains of the 23S rRNA in the assembled 50S subunit and ribosome. Functionally, forms part of the polypeptide exit tunnel. This Rickettsia rickettsii (strain Iowa) protein is Large ribosomal subunit protein uL4.